Here is a 399-residue protein sequence, read N- to C-terminus: Putative 8-amino-7-oxononanoate synthase (399 aa).

Arg-24 lines the substrate pocket. Pyridoxal 5'-phosphate is bound at residue 111–112 (GW). His-141 contributes to the substrate binding site. Pyridoxal 5'-phosphate-binding positions include Ser-189, 214–217 (DEAH), and 243–246 (TFSK). Lys-246 is subject to N6-(pyridoxal phosphate)lysine. Thr-360 provides a ligand contact to substrate.

It belongs to the class-II pyridoxal-phosphate-dependent aminotransferase family. BioF subfamily. Homodimer. Requires pyridoxal 5'-phosphate as cofactor.

The enzyme catalyses 6-carboxyhexanoyl-[ACP] + L-alanine + H(+) = (8S)-8-amino-7-oxononanoate + holo-[ACP] + CO2. It participates in cofactor biosynthesis; biotin biosynthesis. Functionally, catalyzes the decarboxylative condensation of pimeloyl-[acyl-carrier protein] and L-alanine to produce 8-amino-7-oxononanoate (AON), [acyl-carrier protein], and carbon dioxide. The protein is Putative 8-amino-7-oxononanoate synthase (bioF) of Bordetella bronchiseptica (strain ATCC BAA-588 / NCTC 13252 / RB50) (Alcaligenes bronchisepticus).